A 71-amino-acid chain; its full sequence is Large ribosomal subunit protein eL38 (71 aa).

It belongs to the eukaryotic ribosomal protein eL38 family.

This chain is Large ribosomal subunit protein eL38 (RpL38), found in Argas monolakensis (Mono lake bird tick).